The primary structure comprises 292 residues: (S)-phenoxypropionate/alpha-ketoglutarate-dioxygenase (292 aa).

Fe cation contacts are provided by His-108 and Asp-110. Residues Thr-135 and Trp-247 each contribute to the 2-oxoglutarate site. Residue His-262 coordinates Fe cation. Residue Arg-273 coordinates 2-oxoglutarate.

This sequence belongs to the TfdA dioxygenase family. In terms of assembly, monomer. Requires Fe cation as cofactor. L-ascorbate serves as cofactor.

It catalyses the reaction (S)-2-(4-chloro-2-methylphenoxy)propanoate + 2-oxoglutarate + O2 = 2-methyl-4-chlorophenol + pyruvate + succinate + CO2. The catalysed reaction is (S)-(2,4-dichlorophenoxy)propanoate + 2-oxoglutarate + O2 = 2,4-dichlorophenol + pyruvate + succinate + CO2. It functions in the pathway xenobiotic degradation; 2-(2,4-dichlorophenoxy)propanoate degradation. With respect to regulation, inhibited by divalent cations, most significantly by copper and nickel, and by diethylpyrocarbonate (DEPC). Functionally, involved in the degradation of the phenoxypropionate herbicides. Catalyzes the enantiospecific cleavage of the ether bond in the herbicid S-dichlorprop ((S)-2-(2,4-dichlorophenoxy)propionate)(S-2,4-DP) and S-mecoprop ((S)-2-(4-chloro-2-methylphenoxy)propionate)(S-2,4-MCPP). It can also accept (RS)-2-(4-chlorophenoxy)propionate, (RS)-2-(m-chlorophenoxy)propionate and phenoxyacetate derivatives such as 2,4-dichlorophenoxyacetate (2,4-D), however it can only accept 2-oxoglutarate as oxygen acceptor. The sequence is that of (S)-phenoxypropionate/alpha-ketoglutarate-dioxygenase from Delftia acidovorans (Pseudomonas acidovorans).